A 389-amino-acid chain; its full sequence is MILDYDVILARYGEVAIKGPSVRRRFEGKLLHNIKSAFSCRAELRHGRIFIFPEDMDEALDRLSKIFGIVSFSPAVTAETGFDSIEDSLREYIHELRSEGLLTSRTPFAIRCRRVGEHDFTSQEMAAFAGSVVVGEIGAPVDLGNPDLEIHLEIREDETYIYHRVIPGPGGLPAGTQGKVVALLSGGIDSPVATYLMMKRGCQVVAVHMDNAPFTGEEAEEKVEKIAAKLAEYSAGVEFKLRTFSYGRYLESCRRGAPEKMTCVLCKFGMYHLAEMVAEEEGALAIVDGSSLGQVASQTLPNILATRMGVNIPILSPLIGMDKVEIENLAKRIGTYDISVIPDGGCSAVPAHPSTASPPEAVMEASEKINVKEEVAEIFRKGSKTRIFS.

One can recognise a THUMP domain in the interval 57 to 165 (DEALDRLSKI…EDETYIYHRV (109 aa)). ATP-binding positions include 183-184 (LL), Lys267, Gly289, and Gln298.

It belongs to the ThiI family.

The protein resides in the cytoplasm. It carries out the reaction [ThiI sulfur-carrier protein]-S-sulfanyl-L-cysteine + a uridine in tRNA + 2 reduced [2Fe-2S]-[ferredoxin] + ATP + H(+) = [ThiI sulfur-carrier protein]-L-cysteine + a 4-thiouridine in tRNA + 2 oxidized [2Fe-2S]-[ferredoxin] + AMP + diphosphate. It catalyses the reaction [ThiS sulfur-carrier protein]-C-terminal Gly-Gly-AMP + S-sulfanyl-L-cysteinyl-[cysteine desulfurase] + AH2 = [ThiS sulfur-carrier protein]-C-terminal-Gly-aminoethanethioate + L-cysteinyl-[cysteine desulfurase] + A + AMP + 2 H(+). It participates in cofactor biosynthesis; thiamine diphosphate biosynthesis. In terms of biological role, catalyzes the ATP-dependent transfer of a sulfur to tRNA to produce 4-thiouridine in position 8 of tRNAs, which functions as a near-UV photosensor. Also catalyzes the transfer of sulfur to the sulfur carrier protein ThiS, forming ThiS-thiocarboxylate. This is a step in the synthesis of thiazole, in the thiamine biosynthesis pathway. The sulfur is donated as persulfide by IscS. The protein is Probable tRNA sulfurtransferase of Methanothermobacter thermautotrophicus (strain ATCC 29096 / DSM 1053 / JCM 10044 / NBRC 100330 / Delta H) (Methanobacterium thermoautotrophicum).